The chain runs to 139 residues: Phosphoribosyl-AMP cyclohydrolase (139 aa).

D91 provides a ligand contact to Mg(2+). C92 contributes to the Zn(2+) binding site. The Mg(2+) site is built by D93 and D95. Residues C110 and C117 each coordinate Zn(2+).

The protein belongs to the PRA-CH family. As to quaternary structure, homodimer. Mg(2+) serves as cofactor. It depends on Zn(2+) as a cofactor.

The protein resides in the cytoplasm. The enzyme catalyses 1-(5-phospho-beta-D-ribosyl)-5'-AMP + H2O = 1-(5-phospho-beta-D-ribosyl)-5-[(5-phospho-beta-D-ribosylamino)methylideneamino]imidazole-4-carboxamide. It functions in the pathway amino-acid biosynthesis; L-histidine biosynthesis; L-histidine from 5-phospho-alpha-D-ribose 1-diphosphate: step 3/9. Catalyzes the hydrolysis of the adenine ring of phosphoribosyl-AMP. This Brucella canis (strain ATCC 23365 / NCTC 10854 / RM-666) protein is Phosphoribosyl-AMP cyclohydrolase.